The primary structure comprises 427 residues: Endothelin-1 receptor (427 aa).

The signal sequence occupies residues 1–20; that stretch reads MSIFCLAAYFWLTMVGGVMA. Topologically, residues 21–80 are extracellular; it reads DNPERYSANLSSHMEDFTPFPGTEINFLGTTHRPPNLALPSNGSMHGYCPQQTKITTAFK. Asn29 and Asn62 each carry an N-linked (GlcNAc...) asparagine glycan. The chain crosses the membrane as a helical span at residues 81–102; the sequence is YINTVISCTIFIVGMVGNATLL. Topologically, residues 103–112 are cytoplasmic; the sequence is RIIYQNKCMR. A helical transmembrane segment spans residues 113 to 132; that stretch reads NGPNALIASLALGDLIYVVI. At 133–159 the chain is on the extracellular side; the sequence is DLPINVFKLLAGRWPFDHNDFGVFLCK. Residues Cys158 and Cys239 are joined by a disulfide bond. The helical transmembrane segment at 160–181 threads the bilayer; sequence LFPFLQKSSVGITVLNLCALSV. Topologically, residues 182 to 205 are cytoplasmic; sequence DRYRAVASWSRVQGIGIPLITAIE. A helical membrane pass occupies residues 206–229; that stretch reads IVSIWILSFILAIPEAIGFVMVPF. The Extracellular segment spans residues 230–256; the sequence is EYKGELHRTCMLNATSKFMEFYQDVKD. Asn242 carries N-linked (GlcNAc...) asparagine glycosylation. The chain crosses the membrane as a helical span at residues 257–278; it reads WWLFGFYFCMPLVCTAIFYTLM. Residues 279–306 are Cytoplasmic-facing; that stretch reads TCEMLNRRNGSLRIALSEHLKQRREVAK. The chain crosses the membrane as a helical span at residues 307–328; sequence TVFCLVVIFALCWFPLHLSRIL. Residues 329–347 lie on the Extracellular side of the membrane; sequence KKTVYDEMDKNRCELLSFL. Residues 348 to 372 form a helical membrane-spanning segment; the sequence is LLMDYIGINLATMNSCINPIALYFV. The Cytoplasmic portion of the chain corresponds to 373–427; sequence SKKFKNCFQSCLCCCCHQSKSLMTSVPMNGTSIQWKNQEQNNHNTERSSHKDSMN. Positions 408–427 are disordered; sequence KNQEQNNHNTERSSHKDSMN. Residues 416 to 427 show a composition bias toward basic and acidic residues; it reads NTERSSHKDSMN. Ser425 carries the post-translational modification Phosphoserine.

The protein belongs to the G-protein coupled receptor 1 family. Endothelin receptor subfamily. EDNRA sub-subfamily. Interacts with HDAC7 and KAT5.

The protein localises to the cell membrane. Its function is as follows. Receptor for endothelin-1. Mediates its action by association with G proteins that activate a phosphatidylinositol-calcium second messenger system. The rank order of binding affinities for ET-A is: ET1 &gt; ET2 &gt;&gt; ET3. In Mus musculus (Mouse), this protein is Endothelin-1 receptor.